We begin with the raw amino-acid sequence, 473 residues long: Pup--protein ligase (473 aa).

Glu9 lines the Mg(2+) pocket. Residue Arg54 participates in ATP binding. Tyr56 provides a ligand contact to Mg(2+). Asp58 (proton acceptor) is an active-site residue. A Mg(2+)-binding site is contributed by Glu64. Positions 67 and 425 each coordinate ATP.

It belongs to the Pup ligase/Pup deamidase family. Pup-conjugating enzyme subfamily.

It catalyses the reaction ATP + [prokaryotic ubiquitin-like protein]-L-glutamate + [protein]-L-lysine = ADP + phosphate + N(6)-([prokaryotic ubiquitin-like protein]-gamma-L-glutamyl)-[protein]-L-lysine.. Its pathway is protein degradation; proteasomal Pup-dependent pathway. It functions in the pathway protein modification; protein pupylation. Its function is as follows. Catalyzes the covalent attachment of the prokaryotic ubiquitin-like protein modifier Pup to the proteasomal substrate proteins, thereby targeting them for proteasomal degradation. This tagging system is termed pupylation. The ligation reaction involves the side-chain carboxylate of the C-terminal glutamate of Pup and the side-chain amino group of a substrate lysine. This is Pup--protein ligase from Brachybacterium faecium (strain ATCC 43885 / DSM 4810 / JCM 11609 / LMG 19847 / NBRC 14762 / NCIMB 9860 / 6-10).